A 287-amino-acid chain; its full sequence is 4-hydroxybenzoate octaprenyltransferase (287 aa).

5 consecutive transmembrane segments (helical) span residues 20–38 (IGTLLLMWPCLMALWFAAG), 95–115 (IVFLVMALFAFCLVLLLNPLV), 211–231 (IIAAFQFAALACFIIAGLIAE), 235–255 (IYGGGILAFIGFALYQQKLIF), and 266–286 (FLNNNWAGMALFIALGLDYLV).

This sequence belongs to the UbiA prenyltransferase family. Mg(2+) serves as cofactor.

Its subcellular location is the cell inner membrane. The catalysed reaction is all-trans-octaprenyl diphosphate + 4-hydroxybenzoate = 4-hydroxy-3-(all-trans-octaprenyl)benzoate + diphosphate. It participates in cofactor biosynthesis; ubiquinone biosynthesis. Functionally, catalyzes the prenylation of para-hydroxybenzoate (PHB) with an all-trans polyprenyl group. Mediates the second step in the final reaction sequence of ubiquinone-8 (UQ-8) biosynthesis, which is the condensation of the polyisoprenoid side chain with PHB, generating the first membrane-bound Q intermediate 3-octaprenyl-4-hydroxybenzoate. The sequence is that of 4-hydroxybenzoate octaprenyltransferase from Shewanella piezotolerans (strain WP3 / JCM 13877).